The primary structure comprises 598 residues: MFS siderochrome iron transporter D (598 aa).

The segment at 1-34 (MLSSWQKKFFQTPEHPPAEGIAPPRDDGVPNPEP) is disordered. Topologically, residues 1–76 (MLSSWQKKFF…AEAITLTWSK (76 aa)) are cytoplasmic. Residues 77 to 97 (ISLGAAYFLMWLLYLVNGFQA) form a helical membrane-spanning segment. At 98 to 115 (SITGNLSAYVTSGFESHS) the chain is on the extracellular side. A glycan (N-linked (GlcNAc...) asparagine) is linked at Asn102. Residues 116-136 (LIPVISIVSSVMSAATYMPLA) form a helical membrane-spanning segment. Residues 137–144 (KVLNLWDR) lie on the Cytoplasmic side of the membrane. Residues 145–165 (SIGFIIMVAFATLGLILSATC) form a helical membrane-spanning segment. The Extracellular portion of the chain corresponds to 166 to 171 (HDIGTY). A helical transmembrane segment spans residues 172-192 (CAAQVFYSIGFAGIIFSVDVI). Over 193–203 (TADTSTLRDRG) the chain is Cytoplasmic. The helical transmembrane segment at 204–224 (LAYAFTSSPYIITAFGGPAAA) threads the bilayer. Topologically, residues 225-233 (EHFYDSNWR) are extracellular. A helical transmembrane segment spans residues 234-254 (WAYGCFSIVLPVVALPMFCLL). Over 255–289 (RWNRHKAKKSGLLKDKADSGRTWMESIRHYIIEFD) the chain is Cytoplasmic. A helical membrane pass occupies residues 290-310 (ILGVFFLAAGLVLFLLPFSIA). The Extracellular portion of the chain corresponds to 311–318 (GSTEDDWK). A helical membrane pass occupies residues 319–339 (SASIITMLVIGFVCLLVFALV). Topologically, residues 340 to 341 (ER) are cytoplasmic. A helical membrane pass occupies residues 342 to 362 (FVAPVPFLPWALLASRTVLGA). The Extracellular segment spans residues 363–396 (CMLDVCYQIAYYCWFNYYTSYLQVVYGTSITTAG). A helical transmembrane segment spans residues 397–417 (YITSIFDVVSGVWLFIVGFLI). At 418-424 (KKTNRFR) the chain is on the cytoplasmic side. A helical transmembrane segment spans residues 425-445 (WLLFIAVPLYILGVGLMIYFR). Over 446 to 450 (KPSWS) the chain is Extracellular. Residues 451–471 (VGYMIMCQIFIAFAGGTMIIC) form a helical membrane-spanning segment. Residues 472–490 (QQVAVLAASDHDHAASSLA) are Cytoplasmic-facing. The chain crosses the membrane as a helical span at residues 491–511 (FLNVFGTMGSAVGSSISGAIW). The Extracellular segment spans residues 512–562 (THTLPGALQRLLPDSVKADWQTIYDSLEEQLSYERGTLIRQAIALAYASTQ). The helical transmembrane segment at 563 to 583 (SKMLIAGTAIMALSLVWMFVI) threads the bilayer. Residues 584–598 (RDIKLTKTQTKGVLF) lie on the Cytoplasmic side of the membrane.

Belongs to the major facilitator superfamily.

The protein resides in the cell membrane. Major facilitator transporter involved in fusarinine C (FsC) uptake. In contrast to TAFC-mediated iron uptake, FsC-mediated iron uptake via mirD does not play a significant role during infection. The sequence is that of MFS siderochrome iron transporter D from Aspergillus fumigatus (strain ATCC MYA-4609 / CBS 101355 / FGSC A1100 / Af293) (Neosartorya fumigata).